A 279-amino-acid polypeptide reads, in one-letter code: Digeranylgeranylglyceryl phosphate synthase (279 aa).

A run of 8 helical transmembrane segments spans residues 14–34 (VKNCLTASFGTIIGGLIASNF), 36–56 (FGLIGYILLASLIVFLVCGFG), 94–114 (LMISGIIISLFNMICFAIALI), 131–153 (IIGNLIVAYLTGSIFIFGGASVG), 157–175 (ITLILFLCALFATWSREII), 201–221 (IFVAIGFLLCSILLSPLPYIL), 224–244 (FGAPYLMAIMICNVLFILAVL), and 259–279 (SKYIKIIMNLVLLSFVIGSLM).

This sequence belongs to the UbiA prenyltransferase family. DGGGP synthase subfamily. It depends on Mg(2+) as a cofactor.

The protein resides in the cell membrane. It catalyses the reaction sn-3-O-(geranylgeranyl)glycerol 1-phosphate + (2E,6E,10E)-geranylgeranyl diphosphate = 2,3-bis-O-(geranylgeranyl)-sn-glycerol 1-phosphate + diphosphate. It participates in membrane lipid metabolism; glycerophospholipid metabolism. Its function is as follows. Prenyltransferase that catalyzes the transfer of the geranylgeranyl moiety of geranylgeranyl diphosphate (GGPP) to the C2 hydroxyl of (S)-3-O-geranylgeranylglyceryl phosphate (GGGP). This reaction is the second ether-bond-formation step in the biosynthesis of archaeal membrane lipids. This Methanococcus aeolicus (strain ATCC BAA-1280 / DSM 17508 / OCM 812 / Nankai-3) protein is Digeranylgeranylglyceryl phosphate synthase.